Here is a 97-residue protein sequence, read N- to C-terminus: YcgL domain-containing protein APP7_0754 (97 aa).

One can recognise a YcgL domain in the interval 6–90 (NLCAIYKSPK…PPENLLKTFL (85 aa)).

This chain is YcgL domain-containing protein APP7_0754, found in Actinobacillus pleuropneumoniae serotype 7 (strain AP76).